We begin with the raw amino-acid sequence, 422 residues long: Tryptophan synthase beta chain 1 (422 aa).

The residue at position 107 (Lys-107) is an N6-(pyridoxal phosphate)lysine.

Belongs to the TrpB family. As to quaternary structure, tetramer of two alpha and two beta chains. Pyridoxal 5'-phosphate serves as cofactor.

It catalyses the reaction (1S,2R)-1-C-(indol-3-yl)glycerol 3-phosphate + L-serine = D-glyceraldehyde 3-phosphate + L-tryptophan + H2O. Its pathway is amino-acid biosynthesis; L-tryptophan biosynthesis; L-tryptophan from chorismate: step 5/5. The beta subunit is responsible for the synthesis of L-tryptophan from indole and L-serine. This chain is Tryptophan synthase beta chain 1 (trpB1), found in Sulfurisphaera tokodaii (strain DSM 16993 / JCM 10545 / NBRC 100140 / 7) (Sulfolobus tokodaii).